The primary structure comprises 263 residues: HTH-type transcriptional repressor NanR (263 aa).

Residues 1–22 form a disordered region; it reads MGLMNAFDSQTEDSSPAIGRNL. Residues 30-98 form the HTH gntR-type domain; the sequence is KKLSEMVEEE…NGERARVSRP (69 aa). A DNA-binding region (H-T-H motif) is located at residues 58–77; it reads ERELMAFFNVGRPSVREALA.

The protein belongs to the NanR family.

Functionally, transcriptional repressor that controls expression of the genes required for the catabolism of sialic acids. This is HTH-type transcriptional repressor NanR from Shigella boydii serotype 4 (strain Sb227).